We begin with the raw amino-acid sequence, 138 residues long: Translation initiation factor 5A (138 aa).

Position 42 is a hypusine (K42).

The protein belongs to the eIF-5A family.

It localises to the cytoplasm. In terms of biological role, functions by promoting the formation of the first peptide bond. This Pyrobaculum aerophilum (strain ATCC 51768 / DSM 7523 / JCM 9630 / CIP 104966 / NBRC 100827 / IM2) protein is Translation initiation factor 5A (eif5a).